Here is a 2185-residue protein sequence, read N- to C-terminus: Genome polyprotein (2185 aa).

Residue glycine 2 is the site of N-myristoyl glycine; by host attachment. Topologically, residues 2 to 1495 are cytoplasmic; that stretch reads GAQVSTQKTG…HVSRAFICLQ (1494 aa). The amphipathic alpha-helix stretch occupies residues 566-582; it reads FYQGPPGEAVERAIARV. Catalysis depends on for protease 2A activity residues histidine 872 and aspartate 890. Positions 907 and 909 each coordinate Zn(2+). The active-site For protease 2A activity is cysteine 961. Residues cysteine 967 and histidine 969 each coordinate Zn(2+). Residues 1101–1173 form a membrane-binding region; the sequence is NNNWLKKFTE…EQSAPSQSDQ (73 aa). Residues 1101–1239 are oligomerization; it reads NNNWLKKFTE…SPGAGKSVAT (139 aa). The segment at 1122-1126 is RNA-binding; it reads AVKIQ. The SF3 helicase domain maps to 1205-1361; that stretch reads EKKMSNYIQF…SMYSQNGKIN (157 aa). Cysteine 1369, cysteine 1381, and cysteine 1386 together coordinate Zn(2+). The C4-type; degenerate zinc finger occupies 1369–1386; the sequence is CDEECCPVNFKRCCPLVC. Residues 1413-1420 form an RNA-binding region; sequence EYNHRHSV. The oligomerization stretch occupies residues 1424–1429; it reads LEALFQ. The stretch at 1496–1511 is an intramembrane region; the sequence is ALTTFVSVAGIIYIIY. The Cytoplasmic segment spans residues 1512-2185; sequence KLFAGFQGAY…TLRRKWLDSF (674 aa). The residue at position 1521 (tyrosine 1521) is an O-(5'-phospho-RNA)-tyrosine. The Peptidase C3 domain occupies 1541-1719; that stretch reads GPAFEFAVAM…FSAALLKHYF (179 aa). Catalysis depends on for protease 3C activity residues histidine 1580, glutamate 1611, and cysteine 1687. Residues 1950 to 2066 enclose the RdRp catalytic domain; the sequence is GHLIAFDYSG…SYPWPIDASL (117 aa). Aspartate 1956 and aspartate 2052 together coordinate Mg(2+).

The protein belongs to the picornaviruses polyprotein family. In terms of assembly, interacts with capsid protein VP1 and capsid protein VP3 to form heterotrimeric protomers. Interacts with capsid protein VP0, and capsid protein VP3 to form heterotrimeric protomers. Five protomers subsequently associate to form pentamers which serve as building blocks for the capsid. Interacts with capsid protein VP2, capsid protein VP3 and capsid protein VP4 following cleavage of capsid protein VP0. As to quaternary structure, interacts with capsid protein VP1 and capsid protein VP3 in the mature capsid. In terms of assembly, interacts with capsid protein VP0 and capsid protein VP1 to form heterotrimeric protomers. Five protomers subsequently associate to form pentamers which serve as building blocks for the capsid. Interacts with capsid protein VP4 in the mature capsid. Interacts with protein 2C; this interaction may be important for virion morphogenesis. Interacts with capsid protein VP1 and capsid protein VP3. As to quaternary structure, homodimer. In terms of assembly, homohexamer; forms a hexameric ring structure with 6-fold symmetry characteristic of AAA+ ATPases. Interacts (via N-terminus) with host RTN3 (via reticulon domain); this interaction is important for viral replication. Interacts with capsid protein VP3; this interaction may be important for virion morphogenesis. Interacts with protein 3CD. As to quaternary structure, homodimer. Interacts with host GBF1. Interacts (via GOLD domain) with host ACBD3 (via GOLD domain); this interaction allows the formation of a viral protein 3A/ACBD3 heterotetramer with a 2:2 stoichiometry, which will stimulate the recruitment of host PI4KB in order to synthesize PI4P at the viral RNA replication sites. In terms of assembly, interacts with RNA-directed RNA polymerase. Interacts with protein 3AB and with RNA-directed RNA polymerase. As to quaternary structure, interacts with Viral protein genome-linked and with protein 3CD. Mg(2+) is required as a cofactor. In terms of processing, specific enzymatic cleavages in vivo by the viral proteases yield processing intermediates and the mature proteins. Post-translationally, myristoylation is required for the formation of pentamers during virus assembly. Further assembly of 12 pentamers and a molecule of genomic RNA generates the provirion. During virion maturation, immature virions are rendered infectious following cleavage of VP0 into VP4 and VP2. This maturation seems to be an autocatalytic event triggered by the presence of RNA in the capsid and it is followed by a conformational change infectious virion. In terms of processing, myristoylation is required during RNA encapsidation and formation of the mature virus particle. Post-translationally, VPg is uridylylated by the polymerase into VPg-pUpU. This acts as a nucleotide-peptide primer for the genomic RNA replication.

The protein localises to the virion. It localises to the host cytoplasm. The protein resides in the host cytoplasmic vesicle membrane. It is found in the host nucleus. It catalyses the reaction a ribonucleoside 5'-triphosphate + H2O = a ribonucleoside 5'-diphosphate + phosphate + H(+). It carries out the reaction Selective cleavage of Tyr-|-Gly bond in the picornavirus polyprotein.. The enzyme catalyses RNA(n) + a ribonucleoside 5'-triphosphate = RNA(n+1) + diphosphate. The catalysed reaction is Selective cleavage of Gln-|-Gly bond in the poliovirus polyprotein. In other picornavirus reactions Glu may be substituted for Gln, and Ser or Thr for Gly.. Replication or transcription is subject to high level of random mutations by the nucleotide analog ribavirin. In terms of biological role, forms an icosahedral capsid of pseudo T=3 symmetry with capsid proteins VP2 and VP3. The capsid is 300 Angstroms in diameter, composed of 60 copies of each capsid protein and enclosing the viral positive strand RNA genome. Capsid protein VP1 mainly forms the vertices of the capsid. Capsid protein VP1 interacts with host cell receptor to provide virion attachment to target host cells. This attachment induces virion internalization. Tyrosine kinases are probably involved in the entry process. After binding to its receptor, the capsid undergoes conformational changes. Capsid protein VP1 N-terminus (that contains an amphipathic alpha-helix) and capsid protein VP4 are externalized. Together, they shape a pore in the host membrane through which viral genome is translocated to host cell cytoplasm. Its function is as follows. Forms an icosahedral capsid of pseudo T=3 symmetry with capsid proteins VP2 and VP3. The capsid is 300 Angstroms in diameter, composed of 60 copies of each capsid protein and enclosing the viral positive strand RNA genome. Lies on the inner surface of the capsid shell. After binding to the host receptor, the capsid undergoes conformational changes. Capsid protein VP4 is released, Capsid protein VP1 N-terminus is externalized, and together, they shape a pore in the host membrane through which the viral genome is translocated into the host cell cytoplasm. Functionally, component of immature procapsids, which is cleaved into capsid proteins VP4 and VP2 after maturation. Allows the capsid to remain inactive before the maturation step. In terms of biological role, cysteine protease that cleaves viral polyprotein and specific host proteins. It is responsible for the autocatalytic cleavage between the P1 and P2 regions, which is the first cleavage occurring in the polyprotein. Also cleaves the host translation initiation factor EIF4G1, in order to shut down the capped cellular mRNA translation. Inhibits the host nucleus-cytoplasm protein and RNA trafficking by cleaving host members of the nuclear pores. Counteracts stress granule formation probably by antagonizing its assembly or promoting its dissassembly. Cleaves and inhibits host IFIH1/MDA5, thereby inhibiting the type-I IFN production and the establishment of the antiviral state. Cleaves and inhibits host MAVS, thereby inhibiting the type-I IFN production and the establishment of the antiviral state. Its function is as follows. Plays an essential role in the virus replication cycle by acting as a viroporin. Creates a pore in the host endoplasmic reticulum and as a consequence releases Ca2+ in the cytoplasm of infected cell. In turn, high levels of cytoplasmic calcium may trigger membrane trafficking and transport of viral ER-associated proteins to viroplasms, sites of viral genome replication. Induces and associates with structural rearrangements of intracellular membranes. Displays RNA-binding, nucleotide binding and NTPase activities. May play a role in virion morphogenesis and viral RNA encapsidation by interacting with the capsid protein VP3. Functionally, localizes the viral replication complex to the surface of membranous vesicles. Together with protein 3CD binds the Cis-Active RNA Element (CRE) which is involved in RNA synthesis initiation. Acts as a cofactor to stimulate the activity of 3D polymerase, maybe through a nucleid acid chaperone activity. In terms of biological role, localizes the viral replication complex to the surface of membranous vesicles. It inhibits host cell endoplasmic reticulum-to-Golgi apparatus transport and causes the disassembly of the Golgi complex, possibly through GBF1 interaction. This would result in depletion of MHC, trail receptors and IFN receptors at the host cell surface. Plays an essential role in viral RNA replication by recruiting ACBD3 and PI4KB at the viral replication sites, thereby allowing the formation of the rearranged membranous structures where viral replication takes place. Its function is as follows. Acts as a primer for viral RNA replication and remains covalently bound to viral genomic RNA. VPg is uridylylated prior to priming replication into VPg-pUpU. The oriI viral genomic sequence may act as a template for this. The VPg-pUpU is then used as primer on the genomic RNA poly(A) by the RNA-dependent RNA polymerase to replicate the viral genome. During genome replication, the VPg-RNA linkage is removed by the host TDP2, thereby accelerating replication. During the late stage of the replication cycle, host TDP2 is excluded from sites of viral RNA synthesis and encapsidation, allowing for the generation of progeny virions. Involved in the viral replication complex and viral polypeptide maturation. It exhibits protease activity with a specificity and catalytic efficiency that is different from protease 3C. Protein 3CD lacks polymerase activity. Protein 3CD binds to the 5'UTR of the viral genome. Functionally, replicates the viral genomic RNA on the surface of intracellular membranes. May form linear arrays of subunits that propagate along a strong head-to-tail interaction called interface-I. Covalently attaches UMP to a tyrosine of VPg, which is used to prime RNA synthesis. The positive stranded RNA genome is first replicated at virus induced membranous vesicles, creating a dsRNA genomic replication form. This dsRNA is then used as template to synthesize positive stranded RNA genomes. ss(+)RNA genomes are either translated, replicated or encapsidated. In terms of biological role, major viral protease that mediates proteolytic processing of the polyprotein. Cleaves host EIF5B, contributing to host translation shutoff. Also cleaves host PABPC1, contributing to host translation shutoff. Cleaves host NLRP1, triggers host N-glycine-mediated degradation of the autoinhibitory NLRP1 N-terminal fragment. The chain is Genome polyprotein from Homo sapiens (Human).